The chain runs to 339 residues: Dihydroorotase (339 aa).

2 residues coordinate Zn(2+): H12 and H14. Substrate-binding positions include 14-16 and N40; that span reads HVR. Zn(2+) contacts are provided by K94, H133, H167, and D239. Position 94 is an N6-carboxylysine (K94). A substrate-binding site is contributed by H133. D239 is an active-site residue. Substrate-binding residues include H243 and A255.

This sequence belongs to the metallo-dependent hydrolases superfamily. DHOase family. Class II DHOase subfamily. In terms of assembly, homodimer. The cofactor is Zn(2+).

The catalysed reaction is (S)-dihydroorotate + H2O = N-carbamoyl-L-aspartate + H(+). Its pathway is pyrimidine metabolism; UMP biosynthesis via de novo pathway; (S)-dihydroorotate from bicarbonate: step 3/3. Functionally, catalyzes the reversible cyclization of carbamoyl aspartate to dihydroorotate. This Helicobacter pylori (strain ATCC 700392 / 26695) (Campylobacter pylori) protein is Dihydroorotase.